We begin with the raw amino-acid sequence, 419 residues long: Glutamyl-tRNA reductase (419 aa).

Residues 49–52 (TCNR), Ser107, 112–114 (EPQ), and Gln118 contribute to the substrate site. The active-site Nucleophile is Cys50. 187 to 192 (GAGETI) lines the NADP(+) pocket.

This sequence belongs to the glutamyl-tRNA reductase family. In terms of assembly, homodimer.

The enzyme catalyses (S)-4-amino-5-oxopentanoate + tRNA(Glu) + NADP(+) = L-glutamyl-tRNA(Glu) + NADPH + H(+). It participates in porphyrin-containing compound metabolism; protoporphyrin-IX biosynthesis; 5-aminolevulinate from L-glutamyl-tRNA(Glu): step 1/2. In terms of biological role, catalyzes the NADPH-dependent reduction of glutamyl-tRNA(Glu) to glutamate 1-semialdehyde (GSA). This is Glutamyl-tRNA reductase from Psychromonas ingrahamii (strain DSM 17664 / CCUG 51855 / 37).